The chain runs to 189 residues: MQKLIAIEGIDGSGKTTLANLLKEHLESKMKLNVIVTREPFSEDIIKLIEKIGWNDPILLVLLFAADREIHVNWLSKIKDADLIILDRYYFSSIAYQGALGVDEQWIKMVNSYFPKPDMVILLDLPIEVAISRIKNDKFNFEEKIKSLAKVREKYLKLAKEYNFYVVDASKDKNEVLEQAIKIIQKNLF.

9–16 (GIDGSGKT) serves as a coordination point for ATP.

Belongs to the thymidylate kinase family.

The enzyme catalyses dTMP + ATP = dTDP + ADP. This Saccharolobus solfataricus (strain ATCC 35092 / DSM 1617 / JCM 11322 / P2) (Sulfolobus solfataricus) protein is Probable thymidylate kinase 1 (tmk1).